The following is a 409-amino-acid chain: Serine/threonine transporter SstT (409 aa).

A run of 9 helical transmembrane segments spans residues 17–37, 49–69, 83–103, 142–162, 180–200, 218–238, 301–321, 331–351, and 357–377; these read LVGQIIVGLIAGLLLASFFPA, FVSALKAVAPVLVFVLVMASI, ILLLYLVGTFSAAVVAVIASF, ALISANFIGILAWAIGLGIAF, VSLIVKVVIRFAPLGIFGLVA, LVVLLGCMLFVAFVVNPLIVF, GAAITITVLTLAAVHTLGIAV, VVASVCACGASGVAGGSLLLI, and LFGIPSEVAMQVVAVGFIIAI.

Belongs to the dicarboxylate/amino acid:cation symporter (DAACS) (TC 2.A.23) family.

It localises to the cell inner membrane. The enzyme catalyses L-serine(in) + Na(+)(in) = L-serine(out) + Na(+)(out). It catalyses the reaction L-threonine(in) + Na(+)(in) = L-threonine(out) + Na(+)(out). Functionally, involved in the import of serine and threonine into the cell, with the concomitant import of sodium (symport system). This chain is Serine/threonine transporter SstT, found in Pseudomonas aeruginosa (strain UCBPP-PA14).